The primary structure comprises 174 residues: Repair DNA polymerase X (174 aa).

Residues arginine 42–aspartate 51 are involved in ssDNA binding. Mg(2+)-binding residues include aspartate 49 and aspartate 51. Cysteine 81 and cysteine 86 are joined by a disulfide. A Mg(2+)-binding site is contributed by aspartate 100.

This sequence belongs to the DNA polymerase type-X family. Mg(2+) serves as cofactor.

Its subcellular location is the virion. It catalyses the reaction DNA(n) + a 2'-deoxyribonucleoside 5'-triphosphate = DNA(n+1) + diphosphate. In terms of biological role, error-prone polymerase lacking a proofreading 3'-5' exonuclease which catalyzes the gap-filling reaction during the DNA repair process. Specifically binds intermediates in the single-nucleotide base-excision repair process. Also catalyzes DNA polymerization with low nucleotide-insertion fidelity. Probably acts as a strategic DNA mutase, which gives rise to a rapid emergence of variants. Generates mismatched G-G pairs, in that case, the polymerase first binds the deoxynucleotide followed by mismatch formation. Together with the viral DNA ligase, fills the single nucleotide gaps generated by the AP endonuclease. Binds DNA with high affinity via the helix alphaE. This African swine fever virus (isolate Tick/Malawi/Lil 20-1/1983) (ASFV) protein is Repair DNA polymerase X.